An 844-amino-acid chain; its full sequence is DNA mismatch repair protein MutS (844 aa).

610–617 contacts ATP; it reads GPNMGGKS.

The protein belongs to the DNA mismatch repair MutS family.

Its function is as follows. This protein is involved in the repair of mismatches in DNA. It is possible that it carries out the mismatch recognition step. This protein has a weak ATPase activity. This is DNA mismatch repair protein MutS from Francisella tularensis subsp. holarctica (strain FTNF002-00 / FTA).